The chain runs to 344 residues: L-rhamnose-proton symporter (344 aa).

A run of 10 helical transmembrane segments spans residues 4–24 (AITM…CFYA), 38–58 (WSVG…ALLL), 68–88 (FNLS…IGNI), 101–121 (MGIG…TPII), 137–157 (TLLG…AGQL), 175–195 (LLLA…MNAA), 214–234 (LPSY…FCFI), 259–279 (ILLS…YAWG), 290–310 (MSWM…GLVL), and 321–341 (VAVL…VGLG).

It belongs to the L-rhamnose transporter (TC 2.A.7.6) family.

It is found in the cell inner membrane. It catalyses the reaction L-rhamnopyranose(in) + H(+)(in) = L-rhamnopyranose(out) + H(+)(out). Uptake of L-rhamnose across the cytoplasmic membrane with the concomitant transport of protons into the cell (symport system). The polypeptide is L-rhamnose-proton symporter (Salmonella agona (strain SL483)).